The following is a 181-amino-acid chain: Large ribosomal subunit protein uL10 (181 aa).

It belongs to the universal ribosomal protein uL10 family. Part of the ribosomal stalk of the 50S ribosomal subunit. The N-terminus interacts with L11 and the large rRNA to form the base of the stalk. The C-terminus forms an elongated spine to which L12 dimers bind in a sequential fashion forming a multimeric L10(L12)X complex.

Functionally, forms part of the ribosomal stalk, playing a central role in the interaction of the ribosome with GTP-bound translation factors. The polypeptide is Large ribosomal subunit protein uL10 (Protochlamydia amoebophila (strain UWE25)).